Here is a 151-residue protein sequence, read N- to C-terminus: uncharacterized protein (151 aa).

This is an uncharacterized protein from Archaeoglobus fulgidus (strain ATCC 49558 / DSM 4304 / JCM 9628 / NBRC 100126 / VC-16).